Reading from the N-terminus, the 277-residue chain is Large ribosomal subunit protein uL2c (277 aa).

The span at 1–11 (MNTRSYSTFTP) shows a compositional bias: polar residues. 2 disordered regions span residues 1–47 (MNTR…RNNS) and 254–277 (YSAL…RRRK).

The protein belongs to the universal ribosomal protein uL2 family. Part of the 50S ribosomal subunit.

The protein resides in the plastid. Its subcellular location is the chloroplast. This chain is Large ribosomal subunit protein uL2c (rpl2), found in Cryptomeria japonica (Japanese cedar).